A 176-amino-acid chain; its full sequence is Ribose 1,5-bisphosphate phosphokinase PhnN (176 aa).

10 to 17 (GPSGAGKD) serves as a coordination point for ATP.

It belongs to the ribose 1,5-bisphosphokinase family.

The enzyme catalyses alpha-D-ribose 1,5-bisphosphate + ATP = 5-phospho-alpha-D-ribose 1-diphosphate + ADP. Its pathway is metabolic intermediate biosynthesis; 5-phospho-alpha-D-ribose 1-diphosphate biosynthesis; 5-phospho-alpha-D-ribose 1-diphosphate from D-ribose 5-phosphate (route II): step 3/3. Functionally, catalyzes the phosphorylation of ribose 1,5-bisphosphate to 5-phospho-D-ribosyl alpha-1-diphosphate (PRPP). This is Ribose 1,5-bisphosphate phosphokinase PhnN from Methylobacterium radiotolerans (strain ATCC 27329 / DSM 1819 / JCM 2831 / NBRC 15690 / NCIMB 10815 / 0-1).